The primary structure comprises 351 residues: uncharacterized protein (351 aa).

Belongs to the glycosyltransferase group 1 family. Glycosyltransferase 4 subfamily.

This is an uncharacterized protein from Methanocaldococcus jannaschii (strain ATCC 43067 / DSM 2661 / JAL-1 / JCM 10045 / NBRC 100440) (Methanococcus jannaschii).